Consider the following 333-residue polypeptide: Sphingomyelinase C (333 aa).

The first 27 residues, methionine 1–alanine 27, serve as a signal peptide directing secretion. An intrachain disulfide couples cysteine 150 to cysteine 186.

This sequence belongs to the neutral sphingomyelinase family. The cofactor is Mg(2+).

It localises to the secreted. It carries out the reaction a sphingomyelin + H2O = phosphocholine + an N-acylsphing-4-enine + H(+). Activated by cobalt and manganese ions. Its function is as follows. Required, with sphingomyelinase, to effect target cell lysis (hemolysis). The chain is Sphingomyelinase C (sph) from Bacillus cereus.